A 275-amino-acid polypeptide reads, in one-letter code: Fructose-2,6-bisphosphatase TIGAR (275 aa).

His11 (tele-phosphohistidine intermediate) is an active-site residue. Catalysis depends on Glu89, which acts as the Proton donor/acceptor.

This sequence belongs to the phosphoglycerate mutase family.

Its subcellular location is the cytoplasm. The protein localises to the nucleus. The protein resides in the mitochondrion. It carries out the reaction beta-D-fructose 2,6-bisphosphate + H2O = beta-D-fructose 6-phosphate + phosphate. Fructose-bisphosphatase hydrolyzing fructose-2,6-bisphosphate as well as fructose-1,6-bisphosphate. Acts as a negative regulator of glycolysis by lowering intracellular levels of fructose-2,6-bisphosphate in a p53/TP53-dependent manner, resulting in the pentose phosphate pathway (PPP) activation and NADPH production. Contributes to the generation of reduced glutathione to cause a decrease in intracellular reactive oxygen species (ROS) content, correlating with its ability to protect cells from oxidative or metabolic stress-induced cell death. May play a role in mitophagy inhibition. This Xenopus laevis (African clawed frog) protein is Fructose-2,6-bisphosphatase TIGAR.